Here is a 77-residue protein sequence, read N- to C-terminus: RNA-binding protein Hfq (77 aa).

The 60-residue stretch at 9 to 68 (DPFLNALRKEHIPVAIYLVNGIKLQGQIESFDQFVILLKNTVSQMVYKHAISTVVPARAI) folds into the Sm domain.

Belongs to the Hfq family. In terms of assembly, homohexamer.

In terms of biological role, RNA chaperone that binds small regulatory RNA (sRNAs) and mRNAs to facilitate mRNA translational regulation in response to envelope stress, environmental stress and changes in metabolite concentrations. Also binds with high specificity to tRNAs. The polypeptide is RNA-binding protein Hfq (Psychromonas ingrahamii (strain DSM 17664 / CCUG 51855 / 37)).